Reading from the N-terminus, the 180-residue chain is ADP-ribosylation factor-like protein 1 (180 aa).

G2 is lipidated: N-myristoyl glycine. Residues 23-30, 66-70, and 125-128 each bind GTP; these read GLDGAGKT, DLGGQ, and NKQD.

Belongs to the small GTPase superfamily. Arf family. Expressed in neuronal cells. Expression in hypodermal tissues is absent.

The protein localises to the golgi apparatus. Its subcellular location is the cytoplasm. It localises to the cytoplasmic granule. In terms of biological role, GTP-binding protein that may be involved in protein trafficking; may modulate vesicle budding and uncoating within the Golgi apparatus. Plays a role in male tail tip morphogenesis. This chain is ADP-ribosylation factor-like protein 1, found in Caenorhabditis elegans.